Consider the following 185-residue polypeptide: Inner membrane lipoprotein DcrB (185 aa).

Positions methionine 1–alanine 19 are cleaved as a signal peptide. Cysteine 20 carries N-palmitoyl cysteine lipidation. Residue cysteine 20 is the site of S-diacylglycerol cysteine attachment.

Belongs to the DcrB family.

It localises to the cell membrane. Plays a role in cell envelope biogenesis, maintenance of cell envelope integrity and membrane homeostasis. Essential for lipoprotein maturation under conditions where membrane fluidity may be altered. The protein is Inner membrane lipoprotein DcrB of Shigella flexneri.